A 270-amino-acid polypeptide reads, in one-letter code: Methionine-rich protein (270 aa).

The first 18 residues, 1–18 (MLSLWAIGLLGLLNQVEA), serve as a signal peptide directing secretion. Residues 31-52 (QRSAQFSSSGWGTSPAAQNPWS) are compositionally biased toward polar residues. The tract at residues 31 to 95 (QRSAQFSSSG…MPGSMPGAMP (65 aa)) is disordered. Residues 56 to 95 (PMPNTNMPNMNTGSLPGSMPGAMPGSMPGAMPGSMPGAMP) show a composition bias toward low complexity.

In terms of tissue distribution, component of the acid-soluble organic matrix of calcified layers of the shell (at protein level).

It is found in the secreted. The sequence is that of Methionine-rich protein from Lottia gigantea (Giant owl limpet).